The primary structure comprises 366 residues: Holliday junction branch migration complex subunit RuvB (366 aa).

The interval 1-48 (MIDRLMAREAIYQQSNPDPGGDPPEDGPPHGKNAADGGDEPDRGPDPD) is disordered. The tract at residues 21–212 (GDPPEDGPPH…FQIREHLGWY (192 aa)) is large ATPase domain (RuvB-L). Residues Leu51, Arg52, Gly93, Lys96, Thr97, Thr98, 159 to 161 (EDF), Arg202, Tyr212, and Arg249 contribute to the ATP site. Position 97 (Thr97) interacts with Mg(2+). A small ATPAse domain (RuvB-S) region spans residues 213-283 (TRKELAEIVL…VCEAALDMIG (71 aa)). Residues 286–366 (HLGLDKQDRN…KRQMPDRPLS (81 aa)) are head domain (RuvB-H). 3 residues coordinate DNA: Arg341, Arg343, and Arg346.

The protein belongs to the RuvB family. Homohexamer. Forms an RuvA(8)-RuvB(12)-Holliday junction (HJ) complex. HJ DNA is sandwiched between 2 RuvA tetramers; dsDNA enters through RuvA and exits via RuvB. An RuvB hexamer assembles on each DNA strand where it exits the tetramer. Each RuvB hexamer is contacted by two RuvA subunits (via domain III) on 2 adjacent RuvB subunits; this complex drives branch migration. In the full resolvosome a probable DNA-RuvA(4)-RuvB(12)-RuvC(2) complex forms which resolves the HJ.

It localises to the cytoplasm. The enzyme catalyses ATP + H2O = ADP + phosphate + H(+). Functionally, the RuvA-RuvB-RuvC complex processes Holliday junction (HJ) DNA during genetic recombination and DNA repair, while the RuvA-RuvB complex plays an important role in the rescue of blocked DNA replication forks via replication fork reversal (RFR). RuvA specifically binds to HJ cruciform DNA, conferring on it an open structure. The RuvB hexamer acts as an ATP-dependent pump, pulling dsDNA into and through the RuvAB complex. RuvB forms 2 homohexamers on either side of HJ DNA bound by 1 or 2 RuvA tetramers; 4 subunits per hexamer contact DNA at a time. Coordinated motions by a converter formed by DNA-disengaged RuvB subunits stimulates ATP hydrolysis and nucleotide exchange. Immobilization of the converter enables RuvB to convert the ATP-contained energy into a lever motion, pulling 2 nucleotides of DNA out of the RuvA tetramer per ATP hydrolyzed, thus driving DNA branch migration. The RuvB motors rotate together with the DNA substrate, which together with the progressing nucleotide cycle form the mechanistic basis for DNA recombination by continuous HJ branch migration. Branch migration allows RuvC to scan DNA until it finds its consensus sequence, where it cleaves and resolves cruciform DNA. In Rhodopirellula baltica (strain DSM 10527 / NCIMB 13988 / SH1), this protein is Holliday junction branch migration complex subunit RuvB.